Consider the following 90-residue polypeptide: Small ribosomal subunit protein bS18 (90 aa).

Residues 1–23 (MKPMRQKNTRAQGNKSISNALAS) are disordered. Residues 9–21 (TRAQGNKSISNAL) show a composition bias toward polar residues.

The protein belongs to the bacterial ribosomal protein bS18 family. In terms of assembly, part of the 30S ribosomal subunit. Forms a tight heterodimer with protein bS6.

In terms of biological role, binds as a heterodimer with protein bS6 to the central domain of the 16S rRNA, where it helps stabilize the platform of the 30S subunit. In Chlorobium luteolum (strain DSM 273 / BCRC 81028 / 2530) (Pelodictyon luteolum), this protein is Small ribosomal subunit protein bS18.